Reading from the N-terminus, the 1235-residue chain is JNK-interacting protein 3 (1235 aa).

Residues 1 to 22 (MMDNDDALLNNGGPQSGAETVY) form a disordered region. An RH1 domain is found at 25-113 (EDNNMVMSEK…VTQYEREKSA (89 aa)). Positions 84–184 (RINQEQDVEL…NKLHERYTEL (101 aa)) form a coiled coil. Positions 278 to 325 (GAATDSLQQQHQATSPQSPPDTSPVVPNVPPANVGRSTTKKEQRSDNN) are disordered. Residues 282-293 (DSLQQQHQATSP) are compositionally biased toward polar residues. Residues 294–307 (QSPPDTSPVVPNVP) show a composition bias toward pro residues. Residues 366–493 (GKEVENLIME…AVRLTEILRA (128 aa)) adopt a coiled-coil conformation. The region spanning 456-526 (RKRFTRVEMA…TPSNRPTERI (71 aa)) is the RH2 domain. Disordered stretches follow at residues 520–572 (NRPT…MHPA), 813–852 (KPKS…PVNA), and 869–897 (PGAP…STGS). Residues 529 to 543 (GLGGGPMFRNTGGGS) are compositionally biased toward gly residues. Composition is skewed to low complexity over residues 544–555 (PAHSHGSPSRGS) and 821–830 (NSNSKPQQQQ). The segment covering 874–897 (RLSSGNSGSDGNQANNNNSSSTGS) has biased composition (polar residues).

The protein belongs to the JIP scaffold family. As to quaternary structure, forms homo- and heterooligomeric complexes. Binds the TPR motif-containing C-terminal of kinesin light chain, Klc. Pre-assembled syd scaffolding complexes are then transported as a cargo of kinesin, to the required subcellular location.

Its subcellular location is the cytoplasm. Functionally, the JNK-interacting protein (JIP) group of scaffold proteins selectively mediates JNK-signaling by aggregating specific components of the MAPK cascade to form a functional JNK signaling module. May function as a regulator of vesicle transport, through interactions with the JNK-signaling components and motor proteins. Syd is required for efficient kinesin-I mediated axonal transport. In Drosophila pseudoobscura pseudoobscura (Fruit fly), this protein is JNK-interacting protein 3.